The primary structure comprises 315 residues: Ribosomal RNA small subunit methyltransferase H (315 aa).

S-adenosyl-L-methionine contacts are provided by residues 37–39 (GGH), Asp57, Phe83, Asp105, and Gln112.

This sequence belongs to the methyltransferase superfamily. RsmH family.

It localises to the cytoplasm. It carries out the reaction cytidine(1402) in 16S rRNA + S-adenosyl-L-methionine = N(4)-methylcytidine(1402) in 16S rRNA + S-adenosyl-L-homocysteine + H(+). Its function is as follows. Specifically methylates the N4 position of cytidine in position 1402 (C1402) of 16S rRNA. This Pseudomonas putida (strain W619) protein is Ribosomal RNA small subunit methyltransferase H.